The following is a 264-amino-acid chain: MHSERAPFFLKLAAWGGVVFLHFPILIIAAYAFNTEDAAFSFPPQGLTLRWFSVAAQRSDILDAVTLSLKVAALATLIALVLGTLAAAALWRRDFFGKNAISLLLLLPIALPGIVTGLALLTAFKTINLEPGFFTIVVGHATFCVVVVFNNVIARFRRTSWSLVEASMDLGANGWQTFRYVVLPNLSSALLAGGMLAFALSFDEIIVTTFTAGHERTLPLWLLNQLGRPRDVPVTNVVALLVMLVTTLPILGAWWLTREGDNGQ.

Over methionine 1–leucine 12 the chain is Cytoplasmic. A helical transmembrane segment spans residues alanine 13–phenylalanine 33. Residues asparagine 34–lysine 70 are Periplasmic-facing. Residues valine 65 to glycine 252 enclose the ABC transmembrane type-1 domain. A helical transmembrane segment spans residues valine 71–tryptophan 91. The Cytoplasmic segment spans residues arginine 92–alanine 100. Residues isoleucine 101 to leucine 121 form a helical membrane-spanning segment. Topologically, residues threonine 122–asparagine 128 are periplasmic. Residues leucine 129–phenylalanine 149 traverse the membrane as a helical segment. Topologically, residues asparagine 150–alanine 189 are cytoplasmic. A helical transmembrane segment spans residues leucine 190–phenylalanine 210. Topologically, residues threonine 211 to asparagine 236 are periplasmic. The helical transmembrane segment at valine 237–threonine 257 threads the bilayer. At arginine 258–glutamine 264 the chain is on the cytoplasmic side.

Belongs to the binding-protein-dependent transport system permease family. CysTW subfamily.

It is found in the cell inner membrane. Functionally, probably part of the ABC transporter complex YdcSTUV. Probably responsible for the translocation of the substrate across the membrane. This Shigella flexneri protein is Inner membrane ABC transporter permease protein YdcV (ydcV).